The sequence spans 428 residues: Hydrolase acrC (428 aa).

Residue serine 248 is part of the active site.

It belongs to the AB hydrolase superfamily. FUS2 hydrolase family.

It functions in the pathway secondary metabolite biosynthesis. Functionally, hydrolase; part of the cluster that mediates the biosynthesis of acurin A, a highly reduced polyketide coupled to a serine via a peptide bond. The activities of the highly reducing polyketide synthase acrA and the nonribosomal peptide synthetase acrB are collectively responsible for the synthesis of the acurin A core structure with a heptaketide backbone produced by acrA covalently fused to a L-serine by acrB. After the formation of the PK-NRP hybrid product, it is detached from acrB by reductive release to set up the formation of the lactam ring by aldol condensation. The hydrolyase acrC then catalyzes water loss to generate a double bond in the ring. This double bond is probably reduced, which is followed by three oxidations at C-22 to generate the carboxylic acid moiety, involving probably the FAD-binding monooxygenase acrE and the cytochrome P450 monooxygenases acrD and acrF. Finally, a last methylation step performed by the O-methyltransferase acrG leads to the production of acurin A. In Aspergillus aculeatus (strain ATCC 16872 / CBS 172.66 / WB 5094), this protein is Hydrolase acrC.